The chain runs to 558 residues: Glutamine--tRNA ligase (558 aa).

Positions 34-44 (PEPNGYLHIGH) match the 'HIGH' region motif. ATP contacts are provided by residues 35–37 (EPN) and 41–47 (HIGHAKS). 2 residues coordinate L-glutamine: Asp67 and Tyr212. ATP-binding positions include Thr231, 261-262 (RL), and 269-271 (LSK). The 'KMSKS' region signature appears at 268–272 (VLSKR).

Belongs to the class-I aminoacyl-tRNA synthetase family. In terms of assembly, monomer.

The protein resides in the cytoplasm. It carries out the reaction tRNA(Gln) + L-glutamine + ATP = L-glutaminyl-tRNA(Gln) + AMP + diphosphate. This is Glutamine--tRNA ligase from Pseudoalteromonas atlantica (strain T6c / ATCC BAA-1087).